Consider the following 5911-residue polypeptide: Nonribosomal peptide synthetase 30 (5911 aa).

The tract at residues 1-22 (MVPEKPTAQSKSGIGEPFRAGD) is disordered. The tract at residues 352-754 (ALIQPSSTAV…GRKDAQVKIR (403 aa)) is adenylation 1. The region spanning 891–968 (PRPFSVEYSL…EAAAIVARGT (78 aa)) is the Carrier 1 domain. An O-(pantetheine 4'-phosphoryl)serine modification is found at serine 928. A condensation 1 region spans residues 1007 to 1422 (EDAFPCTPLQ…ERLIFVIDQL (416 aa)). Positions 1467–1865 (ERALSQPDRP…SLMFVGRKAD (399 aa)) are adenylation 2. Residues 2001–2077 (QPTSELEAEM…NICSHSYYCS (77 aa)) enclose the Carrier 2 domain. At serine 2038 the chain carries O-(pantetheine 4'-phosphoryl)serine. The segment at 2121–2538 (QDAYPCTPLQ…GPDINMSDIG (418 aa)) is condensation 2. The adenylation 3 stretch occupies residues 2568–2977 (EEQARLRPEA…GRKDSQVKIR (410 aa)). The region spanning 3110–3186 (QPSTNAQREL…LIADNSKSIK (77 aa)) is the Carrier 3 domain. An O-(pantetheine 4'-phosphoryl)serine modification is found at serine 3147. The segment at 3227–3652 (VQDAYPCTPL…LELVIQAFMA (426 aa)) is condensation 3. The segment at 3701-4108 (EERVREQPNA…GRKDSQVKIR (408 aa)) is adenylation 4. In terms of domain architecture, Carrier 4 spans 4248-4325 (PPTTPLECQM…DIIATMTKNK (78 aa)). O-(pantetheine 4'-phosphoryl)serine is present on serine 4285. Positions 4326–4347 (ATGASRRLPRDDDEPIPHTKYA) are disordered. The interval 4353–4793 (SYAQGRLWFL…SLPLLTEDGR (441 aa)) is condensation 4. The tract at residues 4819–5231 (FKEQVSRHPN…GRMDVQVKIR (413 aa)) is adenylation 5. Positions 5360 to 5436 (KPTTDMEVAL…ALARRQEEIV (77 aa)) constitute a Carrier 5 domain. Serine 5397 is subject to O-(pantetheine 4'-phosphoryl)serine. A condensation 5 region spans residues 5474 to 5828 (VEDMLPLTSM…GIKMKLHFFT (355 aa)).

Belongs to the NRP synthetase family.

It functions in the pathway secondary metabolite biosynthesis. Nonribosomal peptide synthetase; part of the gene cluster that mediates the biosynthesis of sansalvamide, a cyclic pentadepsipeptide that shows promising results as potential anti-cancer drug. The nonribosmal peptide synthetase NRPS30 produces sansalvamide by incorporating successively one phenylalanine, one leucine, one alpha-hydroxyisocaproic acid (HICA), one valine and one leucine before sansalvamide is released from by cyclization by the terminal C domain of NRPS30. The HICA residue is probably provided by reduction of alpha-ketoisocaproate by the cluster-specific aldo-keto reductase (NECHADRAFT_45914). This is Nonribosomal peptide synthetase 30 from Fusarium vanettenii (strain ATCC MYA-4622 / CBS 123669 / FGSC 9596 / NRRL 45880 / 77-13-4) (Fusarium solani subsp. pisi).